The following is a 500-amino-acid chain: Maturase K (500 aa).

This sequence belongs to the intron maturase 2 family. MatK subfamily.

It localises to the plastid. The protein resides in the chloroplast. In terms of biological role, usually encoded in the trnK tRNA gene intron. Probably assists in splicing its own and other chloroplast group II introns. This is Maturase K from Brasenia schreberi (Water shield).